The chain runs to 289 residues: BTB/POZ domain-containing protein KCTD7 (289 aa).

The tract at residues 1–42 (MVVVTGREPDSRHSDGAMSSSEAEDDFLEPATPTATQAGHGL) is disordered. One can recognise a BTB domain in the interval 53–141 (VPLNIGGAHF…YAIGPLLEQL (89 aa)).

In terms of assembly, interacts with CUL3. As to expression, high expression in brain, particularly in post-mitotic neurons. Expressed in the mitral cells of the olfactory bulbs, the hippocampus, the deep layers of the cerebral cortex and Purkinje cells of the cerebellum. Not detected in astrocytes or microglial cells. Also expressed in heart, liver, spleen and kidney.

The protein resides in the cell membrane. Its subcellular location is the cytoplasm. It is found in the cytosol. Its function is as follows. May be involved in the control of excitability of cortical neurons. In Mus musculus (Mouse), this protein is BTB/POZ domain-containing protein KCTD7 (Kctd7).